The chain runs to 146 residues: Hemoglobin subunit beta (146 aa).

At V1 the chain carries N-acetylvaline. The Globin domain maps to 2-146 (HLTADEKAAV…VATALAHKYH (145 aa)). S44 carries the phosphoserine modification. K59 is subject to N6-acetyllysine. H63 contacts heme b. K82 carries the N6-acetyllysine modification. H92 lines the heme b pocket. C93 is subject to S-nitrosocysteine. K144 carries the post-translational modification N6-acetyllysine.

Belongs to the globin family. As to quaternary structure, heterotetramer of two alpha chains and two beta chains. As to expression, red blood cells.

In terms of biological role, involved in oxygen transport from the lung to the various peripheral tissues. The sequence is that of Hemoglobin subunit beta (HBB) from Myotis velifer (Mouse-eared bat).